A 1832-amino-acid chain; its full sequence is Putative transcription factor capicua (1832 aa).

Residues Ser41 and Ser49 each carry the phosphoserine modification. 15 disordered regions span residues 66–121 (ANQS…EVGS), 135–227 (STVG…AHPH), 323–353 (QQQQQHQQLQQQQQLQQQQQSPPQMPLNHNN), 389–427 (NQRQKQQQEEPDDQLDDDVFETTTPGISANSKKQTAAMR), 444–493 (DGAA…IRRP), 563–619 (DRRK…GGQG), 690–739 (RERV…SGGE), 784–845 (QPTG…VSAP), 874–938 (PMHH…EDDE), 1069–1105 (TSTLSSSSSNPANNEAPNKFSNFPTQHQPTTTTTISC), 1151–1178 (GQDEEEEEDEGNAEKQENPKVAGKEQVT), 1457–1602 (DGGM…STAA), 1632–1668 (QPEDCQSPSAIAVPSSPRVYGTNYRKKNTAPPPVQKL), 1701–1733 (LESSDQTGRSPRTPKTPLQSARSDASEKGHRKV), and 1789–1817 (ASCTPHSAGPNTPSDSNSSSTTLSASSTS). The span at 96–121 (NANNNSSNNNTSSSNNNNNSNWEVGS) shows a compositional bias: low complexity. Residues 172–186 (PPPPPPASLPAPSAP) are compositionally biased toward pro residues. Low complexity-rich tracts occupy residues 187–203 (PTSGSSSSHNSVGHATS), 211–223 (QQQHQQQQQHQQQ), and 323–342 (QQQQQHQQLQQQQQLQQQQQ). Positions 397–408 (EEPDDQLDDDVF) are enriched in acidic residues. The segment covering 409 to 422 (ETTTPGISANSKKQ) has biased composition (polar residues). Over residues 446–484 (AAGAPATSAAKRRSQSLSALQQQQQQQQQAGAAGTAAGQ) the composition is skewed to low complexity. A DNA-binding region (HMG box) is located at residues 490 to 558 (IRRPMNAFMI…AHFKLHPEWK (69 aa)). A compositionally biased stretch (gly residues) spans 610 to 619 (GGSGSCGGQG). Positions 834–1832 (GSASGGGVVS…TSAADVFQYY (999 aa)) are interaction with gro. Residues 903–914 (ESSEKDKPALDD) are compositionally biased toward basic and acidic residues. A compositionally biased stretch (acidic residues) spans 915-938 (QERDEVEEEDEDEEDDDEDDEDDE). Positions 1078–1091 (NPANNEAPNKFSNF) are enriched in polar residues. Positions 1092 to 1105 (PTQHQPTTTTTISC) are enriched in low complexity. A compositionally biased stretch (low complexity) spans 1462–1471 (GCASAAASGG). Positions 1503 to 1525 (LSQSKSESNVSFGANLGASNGQH) are enriched in polar residues. Low complexity predominate over residues 1547–1589 (NSSNLSSALPTPTSSTTTPNSDEQLPLTPTTSSSNSNLNQQQP). Thr1716 is subject to Phosphothreonine. The span at 1724-1733 (DASEKGHRKV) shows a compositional bias: basic and acidic residues. Residues 1789-1799 (ASCTPHSAGPN) are compositionally biased toward polar residues. A compositionally biased stretch (low complexity) spans 1800 to 1817 (TPSDSNSSSTTLSASSTS).

As to quaternary structure, interacts with gro. As to expression, expressed in the central region of embryos. Also expressed in ovarian follicle cells, the wing imaginal disks and the wing pouch.

Its subcellular location is the nucleus. Its function is as follows. Transcriptional repressor required for the specification of numerous cell types during embryonic development. Required for terminal patterning of early embryos. May associate with gro to repress tll and hkb, restricting their expression to embryonic terminal poles where they initiate correct development of head and tail structures. Required for dorsoventral patterning of oocytes and early embryos. Cooperates with dl to repress zen and other dorsal specific genes within the embryo and promotes expression of the ventralizing factor pip in ovarian follicle cells. Required during wing development for the specification of intervein areas, where it mediates localized repression of vein specific genes such as aos, dpp and vvl. In Drosophila melanogaster (Fruit fly), this protein is Putative transcription factor capicua (cic).